The primary structure comprises 97 residues: Ice-structuring protein (97 aa).

The first 23 residues, 1–23 (MALSLFTVGQLIFLFWTLRITEA), serve as a signal peptide directing secretion. Residues 24–48 (NPDPAAKAAPAAVADPAAAAAAAVA) constitute a propeptide, removed by a dipeptidylpeptidase.

Belongs to the type-I AFP family. In terms of tissue distribution, detected in blood serum (at protein level).

Its subcellular location is the secreted. Functionally, contributes to protect fish blood from freezing at subzero sea water temperatures. Lowers the blood freezing point. Binds to nascent ice crystals and prevents further growth. In Myzopsetta ferruginea (Yellowtail flounder), this protein is Ice-structuring protein.